Consider the following 399-residue polypeptide: 1-deoxy-D-xylulose 5-phosphate reductoisomerase (399 aa).

NADPH is bound by residues Thr16, Gly17, Ser18, Ile19, Gly42, Arg43, Asn44, and Asn127. Lys128 contacts 1-deoxy-D-xylulose 5-phosphate. Glu129 lines the NADPH pocket. Asp153 serves as a coordination point for Mn(2+). The 1-deoxy-D-xylulose 5-phosphate site is built by Ser154, Glu155, Ser179, and His202. Glu155 contacts Mn(2+). Gly208 lines the NADPH pocket. 4 residues coordinate 1-deoxy-D-xylulose 5-phosphate: Ser215, Asn220, Lys221, and Glu224. Glu224 contributes to the Mn(2+) binding site.

Belongs to the DXR family. Mg(2+) serves as cofactor. It depends on Mn(2+) as a cofactor.

It carries out the reaction 2-C-methyl-D-erythritol 4-phosphate + NADP(+) = 1-deoxy-D-xylulose 5-phosphate + NADPH + H(+). It participates in isoprenoid biosynthesis; isopentenyl diphosphate biosynthesis via DXP pathway; isopentenyl diphosphate from 1-deoxy-D-xylulose 5-phosphate: step 1/6. Its function is as follows. Catalyzes the NADPH-dependent rearrangement and reduction of 1-deoxy-D-xylulose-5-phosphate (DXP) to 2-C-methyl-D-erythritol 4-phosphate (MEP). The sequence is that of 1-deoxy-D-xylulose 5-phosphate reductoisomerase from Caulobacter vibrioides (strain NA1000 / CB15N) (Caulobacter crescentus).